Here is a 442-residue protein sequence, read N- to C-terminus: tRNA modification GTPase MnmE (442 aa).

Residues arginine 22, glutamate 79, and lysine 118 each contribute to the (6S)-5-formyl-5,6,7,8-tetrahydrofolate site. One can recognise a TrmE-type G domain in the interval 215-365; the sequence is EIPIAIVGRP…LEKAILFEYQ (151 aa). A K(+)-binding site is contributed by asparagine 225. Residues 225–230, 244–250, and 269–272 each bind GTP; these read NVGKSS, TNIEGTT, and DTAG. Residue serine 229 participates in Mg(2+) binding. Residues threonine 244, isoleucine 246, and threonine 249 each coordinate K(+). Threonine 250 lines the Mg(2+) pocket. Residue lysine 442 participates in (6S)-5-formyl-5,6,7,8-tetrahydrofolate binding.

Belongs to the TRAFAC class TrmE-Era-EngA-EngB-Septin-like GTPase superfamily. TrmE GTPase family. As to quaternary structure, homodimer. Heterotetramer of two MnmE and two MnmG subunits. K(+) serves as cofactor.

The protein localises to the cytoplasm. In terms of biological role, exhibits a very high intrinsic GTPase hydrolysis rate. Involved in the addition of a carboxymethylaminomethyl (cmnm) group at the wobble position (U34) of certain tRNAs, forming tRNA-cmnm(5)s(2)U34. The chain is tRNA modification GTPase MnmE from Mycoplasmopsis pulmonis (strain UAB CTIP) (Mycoplasma pulmonis).